A 358-amino-acid polypeptide reads, in one-letter code: U5 small nuclear ribonucleoprotein 40 kDa protein (358 aa).

Lys-18 participates in a covalent cross-link: Glycyl lysine isopeptide (Lys-Gly) (interchain with G-Cter in SUMO2). Position 21 is an asymmetric dimethylarginine (Arg-21). WD repeat units follow at residues 65 to 104, 108 to 147, 150 to 190, 192 to 231, 234 to 273, 284 to 323, and 326 to 358; these read GHEGEVYCCKFHPNGSTLASAGFDRLILLWNVYGDCDNYA, GHSGAVMELHYNTDGSMLFSASTDKTVAVWDSETGERVKR, GHTS…AIQT, QNTYQVLAVTFNDTSDQIISGGIDNDIKVWDLRQNKLTYT, GHADSVTGLSLSSEGSYLLSNAMDNTVRVWDVRPFAPKER, NFEKNLLRCSWSPDGSKIAAGSADRFVYVWDTTSRRILYK, and GHAGSINEVAFHPDEPIILSASSDKRLYMGEIQ. A Glycyl lysine isopeptide (Lys-Gly) (interchain with G-Cter in SUMO2) cross-link involves residue Lys-271.

In terms of assembly, component of the pre-catalytic and catalytic spliceosome complexes. Component of the postcatalytic spliceosome P complex. Part of the U5 snRNP complex. Interacts with PRPF8. Component of the U4/U6-U5 tri-snRNP complex composed of the U4, U6 and U5 snRNAs and at least PRPF3, PRPF4, PRPF6, PRPF8, PRPF31, SNRNP200, TXNL4A, WDR57, SNRNP40, DDX23, CD2BP2, PPIH, SNU13, EFTUD2, SART1 and USP39. Component of the minor spliceosome, which splices U12-type introns.

It is found in the nucleus. Functionally, required for pre-mRNA splicing as component of the activated spliceosome. Component of the U5 small nuclear ribonucleoprotein (snRNP) complex and the U4/U6-U5 tri-snRNP complex, building blocks of the spliceosome. As a component of the minor spliceosome, involved in the splicing of U12-type introns in pre-mRNAs. This is U5 small nuclear ribonucleoprotein 40 kDa protein (SNRNP40) from Bos taurus (Bovine).